We begin with the raw amino-acid sequence, 1060 residues long: Histone lysine demethylase PHF8 (1060 aa).

Residues proline 41–leucine 92 form a PHD-type zinc finger. A Phosphoserine; by CDK1 modification is found at serine 69. Positions lysine 100–serine 120 are disordered. A linker region spans residues arginine 101–proline 115. Serine 120 is subject to Phosphoserine; by CDK1. The 157-residue stretch at phenylalanine 231–lysine 387 folds into the JmjC domain. Threonine 280 contributes to the substrate binding site. Fe cation contacts are provided by histidine 283 and aspartate 285. Residue lysine 300 participates in substrate binding. Residue histidine 355 participates in Fe cation binding. Polar residues predominate over residues alanine 508–arginine 517. The disordered stretch occupies residues alanine 508–lysine 534. Position 651 is a phosphoserine (serine 651). The residue at position 704 (tyrosine 704) is a Phosphotyrosine. Threonine 705 and threonine 706 each carry phosphothreonine. A Phosphoserine modification is found at serine 722. Disordered regions lie at residues glutamine 768–serine 840, tyrosine 852–valine 902, and lysine 915–leucine 1046. Low complexity-rich tracts occupy residues serine 769 to serine 778 and glycine 785 to serine 804. A phosphoserine mark is found at serine 804, serine 826, serine 834, serine 854, serine 857, and serine 880. A compositionally biased stretch (acidic residues) spans serine 826–aspartate 839. Residues lysine 891–threonine 900 show a composition bias toward basic and acidic residues. Residues alanine 924–proline 934 are compositionally biased toward basic residues. Polar residues predominate over residues arginine 1018–glycine 1030.

Belongs to the JHDM1 histone demethylase family. JHDM1D subfamily. As to quaternary structure, interacts with POLR1B, UBTF, SETD1A, HCFC1, E2F1 and ZNF711. Interacts with ZNF263; recruited to the SIX3 promoter along with other proteins involved in chromatin modification and transcriptional corepression where it contributes to transcriptional repression. Fe(2+) is required as a cofactor. Phosphorylation at Ser-69 and Ser-120 are required for dissociation from chromatin and accumulation of H4K20Me1 levels during prophase.

It is found in the nucleus. Its subcellular location is the nucleolus. The enzyme catalyses N(6),N(6)-dimethyl-L-lysyl(36)-[histone H3] + 2 2-oxoglutarate + 2 O2 = L-lysyl(36)-[histone H3] + 2 formaldehyde + 2 succinate + 2 CO2. It catalyses the reaction N(6),N(6)-dimethyl-L-lysyl(9)-[histone H3] + 2 2-oxoglutarate + 2 O2 = L-lysyl(9)-[histone H3] + 2 formaldehyde + 2 succinate + 2 CO2. Its function is as follows. Histone lysine demethylase with selectivity for the di- and monomethyl states that plays a key role cell cycle progression, rDNA transcription and brain development. Demethylates mono- and dimethylated histone H3 'Lys-9' residue (H3K9Me1 and H3K9Me2), dimethylated H3 'Lys-27' (H3K27Me2) and monomethylated histone H4 'Lys-20' residue (H4K20Me1). Acts as a transcription activator as H3K9Me1, H3K9Me2, H3K27Me2 and H4K20Me1 are epigenetic repressive marks. Involved in cell cycle progression by being required to control G1-S transition. Acts as a coactivator of rDNA transcription, by activating polymerase I (pol I) mediated transcription of rRNA genes. Required for brain development, probably by regulating expression of neuron-specific genes. Only has activity toward H4K20Me1 when nucleosome is used as a substrate and when not histone octamer is used as substrate. May also have weak activity toward dimethylated H3 'Lys-36' (H3K36Me2), however, the relevance of this result remains unsure in vivo. Specifically binds trimethylated 'Lys-4' of histone H3 (H3K4me3), affecting histone demethylase specificity: has weak activity toward H3K9Me2 in absence of H3K4me3, while it has high activity toward H3K9me2 when binding H3K4me3. Positively modulates transcription of histone demethylase KDM5C, acting synergistically with transcription factor ARX; synergy may be related to enrichment of histone H3K4me3 in regulatory elements. In Homo sapiens (Human), this protein is Histone lysine demethylase PHF8 (PHF8).